The chain runs to 434 residues: Forkhead box protein A2 (434 aa).

The fork-head DNA-binding region spans 149 to 243; sequence KPPYSYISLI…ENGCYLRRQK (95 aa). Residues 249–262 are compositionally biased toward basic and acidic residues; that stretch reads KKPSLREGGGKKLS. The segment at 249 to 339 is disordered; it reads KKPSLREGGG…VLSHEAQSHL (91 aa). Composition is skewed to low complexity over residues 263 to 291 and 317 to 333; these read EGSS…SSSP and ASQA…VLSH.

The protein localises to the nucleus. Acts as a transcriptional activator during early development, limiting the extent of mesoderm formation in the gastrula. Binds to DNA via the target sequence 5'-GT[AC]AACA-3', with 5'-GTAAACA-3' being the preferred binding site. This is Forkhead box protein A2 from Xenopus tropicalis (Western clawed frog).